Reading from the N-terminus, the 173-residue chain is Large ribosomal subunit protein uL10 (173 aa).

This sequence belongs to the universal ribosomal protein uL10 family. As to quaternary structure, part of the ribosomal stalk of the 50S ribosomal subunit. The N-terminus interacts with L11 and the large rRNA to form the base of the stalk. The C-terminus forms an elongated spine to which L12 dimers bind in a sequential fashion forming a multimeric L10(L12)X complex.

In terms of biological role, forms part of the ribosomal stalk, playing a central role in the interaction of the ribosome with GTP-bound translation factors. This Corynebacterium aurimucosum (strain ATCC 700975 / DSM 44827 / CIP 107346 / CN-1) (Corynebacterium nigricans) protein is Large ribosomal subunit protein uL10.